Here is a 380-residue protein sequence, read N- to C-terminus: Cytochrome b (380 aa).

Helical transmembrane passes span 34–54 (FGSL…LLAM), 78–99 (WLIR…YFHI), 114–134 (WNTG…GYVL), and 179–199 (FFAL…IHLT). Residues His-84 and His-98 each contribute to the heme b site. His-183 and His-197 together coordinate heme b. His-202 contacts a ubiquinone. 4 consecutive transmembrane segments (helical) span residues 227–247 (LKDI…ALFS), 289–309 (LGGV…PFLH), 321–341 (ISQL…WVGS), and 348–368 (FIII…VLFP).

This sequence belongs to the cytochrome b family. In terms of assembly, the cytochrome bc1 complex contains 11 subunits: 3 respiratory subunits (MT-CYB, CYC1 and UQCRFS1), 2 core proteins (UQCRC1 and UQCRC2) and 6 low-molecular weight proteins (UQCRH/QCR6, UQCRB/QCR7, UQCRQ/QCR8, UQCR10/QCR9, UQCR11/QCR10 and a cleavage product of UQCRFS1). This cytochrome bc1 complex then forms a dimer. It depends on heme b as a cofactor.

It is found in the mitochondrion inner membrane. Functionally, component of the ubiquinol-cytochrome c reductase complex (complex III or cytochrome b-c1 complex) that is part of the mitochondrial respiratory chain. The b-c1 complex mediates electron transfer from ubiquinol to cytochrome c. Contributes to the generation of a proton gradient across the mitochondrial membrane that is then used for ATP synthesis. The polypeptide is Cytochrome b (MT-CYB) (Pachyptila salvini (Salvin's prion)).